An 89-amino-acid chain; its full sequence is Prostaglandin E2 receptor EP3 subtype (89 aa).

Residues Gly1–Gly18 traverse the membrane as a helical segment. At Gln19–Asn48 the chain is on the extracellular side. N-linked (GlcNAc...) asparagine glycosylation is present at Asn38. Residues Val49–Ile74 traverse the membrane as a helical segment. Over Lys75–Gln89 the chain is Cytoplasmic.

This sequence belongs to the G-protein coupled receptor 1 family. In terms of assembly, interacts (via C-terminus) with MKLN1.

It is found in the cell membrane. In terms of biological role, receptor for prostaglandin E2 (PGE2). Required for normal development of fever in response to pyrinogens, including IL1B, prostaglandin E2 and bacterial lipopolysaccharide (LPS). Required for normal potentiation of platelet aggregation by prostaglandin E2, and thus plays a role in the regulation of blood coagulation. Required for increased HCO3(-) secretion in the duodenum in response to mucosal acidification, and thereby contributes to the protection of the mucosa against acid-induced ulceration. Not required for normal kidney function, normal urine volume and osmolality. The chain is Prostaglandin E2 receptor EP3 subtype (PTGER3) from Ovis aries (Sheep).